The primary structure comprises 877 residues: Alanine--tRNA ligase (877 aa).

Zn(2+)-binding residues include His561, His565, Cys669, and His673.

Belongs to the class-II aminoacyl-tRNA synthetase family. Requires Zn(2+) as cofactor.

Its subcellular location is the cytoplasm. The enzyme catalyses tRNA(Ala) + L-alanine + ATP = L-alanyl-tRNA(Ala) + AMP + diphosphate. Catalyzes the attachment of alanine to tRNA(Ala) in a two-step reaction: alanine is first activated by ATP to form Ala-AMP and then transferred to the acceptor end of tRNA(Ala). Also edits incorrectly charged Ser-tRNA(Ala) and Gly-tRNA(Ala) via its editing domain. The protein is Alanine--tRNA ligase of Endomicrobium trichonymphae.